The chain runs to 725 residues: Glyoxysomal fatty acid beta-oxidation multifunctional protein MFP-a (725 aa).

Glu-119 acts as the Nucleophile in catalysis. Glu-139 acts as the Proton acceptor in catalysis. Residues 723–725 carry the Microbody targeting signal motif; that stretch reads SRL.

This sequence in the N-terminal section; belongs to the enoyl-CoA hydratase/isomerase family. The protein in the central section; belongs to the 3-hydroxyacyl-CoA dehydrogenase family.

The protein localises to the glyoxysome. It catalyses the reaction a (3S)-3-hydroxyacyl-CoA = a (2E)-enoyl-CoA + H2O. The catalysed reaction is a 4-saturated-(3S)-3-hydroxyacyl-CoA = a (3E)-enoyl-CoA + H2O. The enzyme catalyses a (3Z)-enoyl-CoA = a 4-saturated (2E)-enoyl-CoA. It carries out the reaction a (3E)-enoyl-CoA = a 4-saturated (2E)-enoyl-CoA. It catalyses the reaction (3S)-3-hydroxybutanoyl-CoA = (3R)-3-hydroxybutanoyl-CoA. The catalysed reaction is a (3S)-3-hydroxyacyl-CoA + NAD(+) = a 3-oxoacyl-CoA + NADH + H(+). Its pathway is lipid metabolism; fatty acid beta-oxidation. The chain is Glyoxysomal fatty acid beta-oxidation multifunctional protein MFP-a from Brassica napus (Rape).